A 939-amino-acid chain; its full sequence is Isoleucine--tRNA ligase (939 aa).

Residues Pro58–His68 carry the 'HIGH' region motif. Glu574 serves as a coordination point for L-isoleucyl-5'-AMP. The 'KMSKS' region signature appears at Lys615 to Ser619. An ATP-binding site is contributed by Lys618. 4 residues coordinate Zn(2+): Cys902, Cys905, Cys922, and Cys925.

It belongs to the class-I aminoacyl-tRNA synthetase family. IleS type 1 subfamily. In terms of assembly, monomer. The cofactor is Zn(2+).

The protein localises to the cytoplasm. The catalysed reaction is tRNA(Ile) + L-isoleucine + ATP = L-isoleucyl-tRNA(Ile) + AMP + diphosphate. In terms of biological role, catalyzes the attachment of isoleucine to tRNA(Ile). As IleRS can inadvertently accommodate and process structurally similar amino acids such as valine, to avoid such errors it has two additional distinct tRNA(Ile)-dependent editing activities. One activity is designated as 'pretransfer' editing and involves the hydrolysis of activated Val-AMP. The other activity is designated 'posttransfer' editing and involves deacylation of mischarged Val-tRNA(Ile). The chain is Isoleucine--tRNA ligase from Aromatoleum aromaticum (strain DSM 19018 / LMG 30748 / EbN1) (Azoarcus sp. (strain EbN1)).